The primary structure comprises 267 residues: Phosphate import ATP-binding protein PstB 2 (267 aa).

One can recognise an ABC transporter domain in the interval 21–262 (LSTKDVHVYY…AKLQSTNDYV (242 aa)). 53–60 (GPSGSGKS) is an ATP binding site.

It belongs to the ABC transporter superfamily. Phosphate importer (TC 3.A.1.7) family. As to quaternary structure, the complex is composed of two ATP-binding proteins (PstB), two transmembrane proteins (PstC and PstA) and a solute-binding protein (PstS).

Its subcellular location is the cell membrane. It catalyses the reaction phosphate(out) + ATP + H2O = ADP + 2 phosphate(in) + H(+). Its function is as follows. Part of the ABC transporter complex PstSACB involved in phosphate import. Responsible for energy coupling to the transport system. In Streptococcus pneumoniae (strain ATCC BAA-255 / R6), this protein is Phosphate import ATP-binding protein PstB 2.